The chain runs to 580 residues: Glutamine--tRNA ligase (580 aa).

The 'HIGH' region signature appears at 51-61; the sequence is PEPNGYLHIGH. Residues 52–54 and 58–64 contribute to the ATP site; these read EPN and HIGHAKS. L-glutamine contacts are provided by D84 and Y233. Residues T252 and 287-288 contribute to the ATP site; that span reads RL. A 'KMSKS' region motif is present at residues 294 to 298; that stretch reads ITSKR.

Belongs to the class-I aminoacyl-tRNA synthetase family. As to quaternary structure, monomer.

It is found in the cytoplasm. It carries out the reaction tRNA(Gln) + L-glutamine + ATP = L-glutaminyl-tRNA(Gln) + AMP + diphosphate. The protein is Glutamine--tRNA ligase of Ralstonia nicotianae (strain ATCC BAA-1114 / GMI1000) (Ralstonia solanacearum).